The primary structure comprises 257 residues: tRNA (guanine-N(1)-)-methyltransferase (257 aa).

Residues G112 and 136–141 (LGDYVL) contribute to the S-adenosyl-L-methionine site.

Belongs to the RNA methyltransferase TrmD family. In terms of assembly, homodimer.

Its subcellular location is the cytoplasm. It catalyses the reaction guanosine(37) in tRNA + S-adenosyl-L-methionine = N(1)-methylguanosine(37) in tRNA + S-adenosyl-L-homocysteine + H(+). Specifically methylates guanosine-37 in various tRNAs. The chain is tRNA (guanine-N(1)-)-methyltransferase from Salinispora tropica (strain ATCC BAA-916 / DSM 44818 / JCM 13857 / NBRC 105044 / CNB-440).